A 1493-amino-acid polypeptide reads, in one-letter code: MSIMSISLHSASSDTVSLTSRRTISTSKHWAAIFDERIYQICNIVHPGLPIDNAAVEHIRYFLQSIVFELIEARATSVVEVDKTAKKLFAFGLQTVCKEAWDNMHQQLQKHKYQKALKTVLESQHRLAAVIKETLGPREKEKKDREKKEIERIACYIYYACESVTEDVLRLTGNYVKNIRNSEQKITMANLDVAMNGDKALMELRTKLRNEEEAESPGGFGFLSEFEEFVAEETEEKTLSNSQTYESVAVDFLRDERRFIRELNRINVFRRRIESVAATDVDKQIVCNLFGNLTEIHDLALKIERTLEDAIELSDTQCIGMGIWEHGEAYEFDTYTFYIRRDGGEMNETRHATYVINDNIKALLESERFASLFQSGEHYLGSSLDGQSFRLAVQYVLPQLLHIPIFHIYQYHEYITRLHQLSSSEEDRRDLNDCRSAFERVVGCVSDMSPELKTKITQFLDQQAKSEKIYNVKRLNEIQSSIDGFTGSPIGKTCNELEKDGDLGMIRPSLQFSSEITKNKKWKTERFVYIFDQMIVLCKRHRNTLKFKDRLAVHSIDVFDIPDSEVTNCFKIESHDKSSLPKIYHFVCKNPEEKRQWMAVLVKVTTKSVLDRILDNHEKEEAKRIPLVVPGPDQYRFSEPDTEDNISFEDYTSSSGIPVIKCGTVLKLIERLTYHSYTDSKYILTFLISYRSFCTPNDLFSLLLERFNIPTPKKLQQPKQGGGPLAGRYDTVQSHGLSAISSSSCINPLCEQKFRKEFQQPIQLRVLSVINQWVKLHWYDFQCDPVLLDALELFLNRCCDPREGLSKQHKKFCKTILALIEKRVKNPPGIMQQPNENGDKGAADEGHVNSAFVFGDDQQHPPQHQVYTNESPKETNQVLWHTAQKGDVDHYDLLTLHPIEIGRQLTLLHSDLYRAIQPIELVEAAWTKAEKWRKSPQLLRLTDHSTLLTYWVSRSIVETESLEERMAMFNRVLEVMSVFEELHNFTGLVAFYSALNSSCIFRLKWCWDGLDNEKKKCFDRFNTLCERRWQEMQKRLSSINPPCIPFFGHYLSNIYFLEQGNSTFVNKSPPHGAAGAQKQQKDDLKASDPENSNKQFKQLVSFLKLRKISNVIREIQIFQDQRYSLTLEPTIRQFFESINPKNDFKSNEDLEEYLYNKSLEIQPKGLDTPTAELKPKHNASTLRSPGVKPPKAAGNHYSANHPIGLHLHSQNSHSAPHAMSSQSSTVPNTPLSAHETKRSLSHNQDDAPLQQFVDIRFERKGTHPKIPVLQPPPLLPRSSRANQSNSVSLPPTTQAPMPPAPKSSGMMSTATSPTTLTTTTTPSSAGGPPPKLHPRRMTQQPMSPLAKSPLTPSRDNSSPSAFQFPVVYEASTAPPLPPRPSTSSDVSSSPSTSGSTSSATKENQEQLRVIFDREESHSPTVRLSVPLPPALPPPRGSSVFRAPPPLPPKSNRHNSNSPTLSSEQPFEDPMSPSIFVNTPPPPLPPKTYRSSNK.

A DH domain is found at 244–448 (TYESVAVDFL…ERVVGCVSDM (205 aa)). Residues 496–606 (ELEKDGDLGM…WMAVLVKVTT (111 aa)) form the PH domain. Residues 656–824 (GIPVIKCGTV…TILALIEKRV (169 aa)) form the N-terminal Ras-GEF domain. Residues 897 to 1164 (HPIEIGRQLT…YNKSLEIQPK (268 aa)) enclose the Ras-GEF domain. 3 disordered regions span residues 1067–1091 (KSPP…DPEN), 1165–1248 (GLDT…DDAP), and 1263–1493 (HPKI…SSNK). Basic and acidic residues predominate over residues 1079-1088 (QQKDDLKASD). Polar residues-rich tracts occupy residues 1208–1231 (HSQN…NTPL) and 1279–1289 (SRANQSNSVSL). Positions 1308–1326 (STATSPTTLTTTTTPSSAG) are enriched in low complexity. Polar residues predominate over residues 1350-1361 (LTPSRDNSSPSA). The segment covering 1381–1400 (STSSDVSSSPSTSGSTSSAT) has biased composition (low complexity). The segment covering 1402–1417 (ENQEQLRVIFDREESH) has biased composition (basic and acidic residues). The span at 1426–1435 (PLPPALPPPR) shows a compositional bias: pro residues. Positions 1453-1464 (HNSNSPTLSSEQ) are enriched in polar residues.

As to quaternary structure, interacts with cmd-1 in the presence of Ca(2+).

In terms of biological role, promotes the exchange of Ras-bound GDP by GTP. May regulate signaling pathways downstream of receptor tyrosine kinase, egl-15 and let-23. Required for larval and male spicule development, fluid homeostasis, vulva induction, spermatogenesis, and oogenesis by promoting meiosis prophase exit during oocyte maturation. Required for the delamination of G1 cell by promoting the loss of cell junctions and detachment from the excretory system during larval development. Plays a role in nicotinic acetylcholine receptor (nAChR)-mediated sensitivity to nicotine. Regulates synaptic levels of nAchR subunit lev-1 in the nerve cord. In Caenorhabditis elegans, this protein is Son of sevenless homolog.